The sequence spans 368 residues: Glucose 1-dehydrogenase 2 (368 aa).

Cys41 serves as a coordination point for Zn(2+). Thr43 contacts substrate. Zn(2+) is bound by residues His68 and Glu69. Asn91 serves as a coordination point for substrate. Zn(2+) contacts are provided by Cys95, Cys98, Cys101, Cys109, and Gln152. Substrate contacts are provided by Gln152 and Asp156. Residues 213 to 215 (NRR), 279 to 281 (FGF), 307 to 309 (LDN), and Lys356 each bind NADP(+). Substrate is bound at residue Asn309.

This sequence belongs to the zinc-containing alcohol dehydrogenase family. Glucose 1-dehydrogenase subfamily. The cofactor is Zn(2+).

It carries out the reaction D-glucose + NAD(+) = D-glucono-1,5-lactone + NADH + H(+). The enzyme catalyses D-glucose + NADP(+) = D-glucono-1,5-lactone + NADPH + H(+). Catalyzes the NAD(P)(+)-dependent oxidation of D-glucose to D-gluconate via gluconolactone. Can utilize both NAD(+) and NADP(+) as electron acceptor. Is involved in the degradation of glucose through a non-phosphorylative variant of the Entner-Doudoroff pathway. In Saccharolobus solfataricus (strain ATCC 35092 / DSM 1617 / JCM 11322 / P2) (Sulfolobus solfataricus), this protein is Glucose 1-dehydrogenase 2.